The sequence spans 1097 residues: Error-prone DNA polymerase (1097 aa).

Positions 1039–1097 (PTGRGDEFAHGSPGGGDSRDRSPPKPRDIVVPLCRARHKGIDPEPETMPSAFPKPRDFR) are disordered. The segment covering 1055–1066 (DSRDRSPPKPRD) has biased composition (basic and acidic residues).

Belongs to the DNA polymerase type-C family. DnaE2 subfamily.

The protein resides in the cytoplasm. It catalyses the reaction DNA(n) + a 2'-deoxyribonucleoside 5'-triphosphate = DNA(n+1) + diphosphate. Functionally, DNA polymerase involved in damage-induced mutagenesis and translesion synthesis (TLS). It is not the major replicative DNA polymerase. The polypeptide is Error-prone DNA polymerase (Allorhizobium ampelinum (strain ATCC BAA-846 / DSM 112012 / S4) (Agrobacterium vitis (strain S4))).